The sequence spans 335 residues: Glyceraldehyde-3-phosphate dehydrogenase (335 aa).

NAD(+)-binding positions include 12–13 (RI), aspartate 34, and arginine 79. D-glyceraldehyde 3-phosphate-binding positions include 150–152 (SCT), threonine 181, 210–211 (TG), and arginine 233. The active-site Nucleophile is the cysteine 151. An NAD(+)-binding site is contributed by asparagine 315.

It belongs to the glyceraldehyde-3-phosphate dehydrogenase family. Homotetramer.

The protein resides in the cytoplasm. The catalysed reaction is D-glyceraldehyde 3-phosphate + phosphate + NAD(+) = (2R)-3-phospho-glyceroyl phosphate + NADH + H(+). Its pathway is carbohydrate degradation; glycolysis; pyruvate from D-glyceraldehyde 3-phosphate: step 1/5. This Ogataea parapolymorpha (strain ATCC 26012 / BCRC 20466 / JCM 22074 / NRRL Y-7560 / DL-1) (Yeast) protein is Glyceraldehyde-3-phosphate dehydrogenase (GPD).